Reading from the N-terminus, the 158-residue chain is Urease accessory protein UreE (158 aa).

This sequence belongs to the UreE family.

It localises to the cytoplasm. Its function is as follows. Involved in urease metallocenter assembly. Binds nickel. Probably functions as a nickel donor during metallocenter assembly. This Klebsiella pneumoniae subsp. pneumoniae (strain ATCC 700721 / MGH 78578) protein is Urease accessory protein UreE.